A 619-amino-acid polypeptide reads, in one-letter code: Very-long-chain aldehyde decarbonylase GL1-4 (619 aa).

The next 5 helical transmembrane spans lie at I45 to I65, G94 to P114, G126 to H146, F178 to L198, and A325 to Y345. One can recognise a Fatty acid hydroxylase domain in the interval V138–T272.

Belongs to the sterol desaturase family. In terms of assembly, homodimer. In terms of tissue distribution, expressed ubiquitously at low levels, with higher accumulation in developing panicles, shoots and flag leaves.

It is found in the endoplasmic reticulum membrane. The enzyme catalyses a long-chain fatty aldehyde + 2 NADPH + O2 + H(+) = a long-chain alkane + formate + 2 NADP(+) + H2O. Its function is as follows. Aldehyde decarbonylase involved in the conversion of aldehydes to alkanes. Core component of a very-long-chain alkane synthesis complex. The protein is Very-long-chain aldehyde decarbonylase GL1-4 of Oryza sativa subsp. japonica (Rice).